Consider the following 261-residue polypeptide: Ribosomal RNA small subunit methyltransferase J (261 aa).

S-adenosyl-L-methionine contacts are provided by residues 101–102 (RD), 117–118 (ER), 153–154 (SS), and Asp176.

It belongs to the methyltransferase superfamily. RsmJ family.

It localises to the cytoplasm. It catalyses the reaction guanosine(1516) in 16S rRNA + S-adenosyl-L-methionine = N(2)-methylguanosine(1516) in 16S rRNA + S-adenosyl-L-homocysteine + H(+). Functionally, specifically methylates the guanosine in position 1516 of 16S rRNA. The polypeptide is Ribosomal RNA small subunit methyltransferase J (Vibrio cholerae serotype O1 (strain ATCC 39315 / El Tor Inaba N16961)).